The sequence spans 457 residues: Fibrinogen C domain-containing protein 1-B (457 aa).

The segment at 1-21 (MGSDRWKNIRGTPQMEDSVQE) is disordered. Topologically, residues 1-33 (MGSDRWKNIRGTPQMEDSVQEKSQRKGCGYILC) are cytoplasmic. The helical; Signal-anchor for type II membrane protein transmembrane segment at 34 to 54 (TVLLSVAVLLAVTVTGAVLFM) threads the bilayer. Topologically, residues 55–457 (NQYHAPSTEP…MKIRPQREEN (403 aa)) are extracellular. In terms of domain architecture, Fibrinogen C-terminal spans 231–454 (CANGSKPRDC…FTEMKIRPQR (224 aa)). An N-linked (GlcNAc...) asparagine glycan is attached at Asn-233. Residues Cys-240 and Cys-269 are joined by a disulfide bond. An N-linked (GlcNAc...) asparagine glycan is attached at Asn-336. Ca(2+) is bound by residues Asp-389 and Asp-391. Cys-397 and Cys-410 are disulfide-bonded.

Homotetramer; disulfide-linked.

It localises to the membrane. Its function is as follows. Acetyl group-binding receptor which shows a calcium-dependent binding to acetylated structures such as chitin, some N-acetylated carbohydrates, and amino acids. The polypeptide is Fibrinogen C domain-containing protein 1-B (fibcd1-b) (Xenopus laevis (African clawed frog)).